Reading from the N-terminus, the 88-residue chain is Small ribosomal subunit protein uS15c (88 aa).

It belongs to the universal ribosomal protein uS15 family. Part of the 30S ribosomal subunit.

Its subcellular location is the plastid. The protein localises to the chloroplast. The sequence is that of Small ribosomal subunit protein uS15c (rps15) from Draba nemorosa (Woodland whitlowgrass).